We begin with the raw amino-acid sequence, 61 residues long: Beta-insect depressant toxin BaIT2 (61 aa).

Residues 1–61 (DGYIRRRDGC…TWKSETNTCG (61 aa)) form the LCN-type CS-alpha/beta domain. Cystine bridges form between cysteine 10–cysteine 60, cysteine 14–cysteine 35, cysteine 21–cysteine 42, and cysteine 25–cysteine 44.

Belongs to the long (4 C-C) scorpion toxin superfamily. Sodium channel inhibitor family. Beta subfamily. In terms of tissue distribution, expressed by the venom gland.

It localises to the secreted. Depressant insect beta-toxins cause a transient contraction paralysis followed by a slow flaccid paralysis. They bind voltage-independently at site-4 of sodium channels (Nav) and shift the voltage of activation toward more negative potentials thereby affecting sodium channel activation and promoting spontaneous and repetitive firing. This toxin is active only on insects. This Buthacus arenicola (North African scorpion) protein is Beta-insect depressant toxin BaIT2.